The following is a 135-amino-acid chain: Biglycan (135 aa).

LRR repeat units lie at residues 4–24, 25–46, 49–72, 73–95, and 96–117; these read KLNY…DLPE, TLNE…DLLR, KLYR…SFLP, TLRE…PDLK, and LLQV…DFCP. A glycan (N-linked (GlcNAc...) asparagine) is linked at asparagine 65. N-linked (GlcNAc...) asparagine glycosylation occurs at asparagine 106.

Belongs to the small leucine-rich proteoglycan (SLRP) family. SLRP class I subfamily. In terms of assembly, homodimer. Forms a ternary complex with MFAP2 and ELN. Post-translationally, the two attached glycosaminoglycan chains can be either chondroitin sulfate or dermatan sulfate. Found in several connective tissues, especially in articular cartilages.

It localises to the secreted. It is found in the extracellular space. The protein localises to the extracellular matrix. Its function is as follows. May be involved in collagen fiber assembly. The polypeptide is Biglycan (BGN) (Oryctolagus cuniculus (Rabbit)).